Here is a 242-residue protein sequence, read N- to C-terminus: Type III pantothenate kinase (242 aa).

Position 7–14 (7–14) interacts with ATP; sequence DLGNSRFK. Substrate-binding positions include Tyr-91 and 98-101; that span reads GVDR. Catalysis depends on Asp-100, which acts as the Proton acceptor. Thr-121 provides a ligand contact to ATP. Thr-171 is a binding site for substrate.

The protein belongs to the type III pantothenate kinase family. Homodimer. The cofactor is NH4(+). K(+) is required as a cofactor.

Its subcellular location is the cytoplasm. The catalysed reaction is (R)-pantothenate + ATP = (R)-4'-phosphopantothenate + ADP + H(+). The protein operates within cofactor biosynthesis; coenzyme A biosynthesis; CoA from (R)-pantothenate: step 1/5. Functionally, catalyzes the phosphorylation of pantothenate (Pan), the first step in CoA biosynthesis. The sequence is that of Type III pantothenate kinase from Xylella fastidiosa (strain 9a5c).